Here is a 1234-residue protein sequence, read N- to C-terminus: MSDTTDSTSRFRLGDDIHFSYDNQSQPTTSESPAPSSSNKKKKKKANKKHKQPVEATLNNPEDDYPTSRVIKQAPNGDVIVESLDDEASHQNQENHRHHHQYTNIWDSASIEEQENLKSFWESLDESSKMELVKIDKKSIMEIFKNETKANNQSHHGHGANGTSSASGANSAANANPVTPSCACKYCGRRSTIIEDELENIYDNHFDDIIDFIHEIRDINDLNALPGLLFGGFHMLEEEHKLQKRQQRMKHKRDHPASQNHTENPEVHGEHPHVQPQNFVNSRAPADSINTSVVDNRTPYPVAAGSIGAKQLQHQQQLQQQLQQQQLRQLQQQLQQEQNVHSQPQQSLQMQQQLNENDLPGGNTSDLAKHLEKMSLEDKKGEYTNERKIFQKLLDPKLVEVLDKVDFEKVKSGNYVGSASQANLFQRADCLREIVRDLHKADKTQLEQGLSFLKNISSIFSNSKTPFPADVTSNPRNFSSKFNDQLSNFAEDLLKNDGNSFIEMMESLSESRTAREDLLKDPTKKDAQAWVDEDDNNDSKRPDASTVKQPSQEYEYYEESEEDEEELSEEDEDDADDNGLNEDDDLVQDGHHDDSASDTESEISEEEKMQEIRRLFLIQVIKLFQERLKSAYKEKLSEDRTQKLIEELEAEENAKKERELKKLKQKEKAKEKKRLQQLAKEEEKKKKEEEQRAKEEELKQKQEALKADQRRRKEEAKLKREEEKKKRIEELKRKEEEHKKKVEAQQKKEEEAKKLKEERKKKAEEERKKKEEEKRQKELLKKQKEEERERLKLEAEENERLEKEQQELQELQESQNQLELESAQLPAELAEEINASPDSFSPTKNHLLEQLYQARPSSVSGPTTISPPIQFTPEAVPPVAAVSSVVPSVVPISPALSGAILNGTGSPNSRNAMLYGSSAQAQLPNGLNSSTSNMSPWSSKSRLNSTSGASLQSNLFQPQLSASGFSPFNDFSTPATSAGIGSVNVNAPLASTAVEPLAGANNGGVWNPSTTSSRNNSIWSNTPNLNNASIWGNTLPSLAGGAGAGASTPSAAHTLPNSAPLASDNELIQVAAYNTFQMLQNSNQLEFGAAPLMKLFSGVKLLLGNNALTINQLLSSCDSTSVYHFEFVYDDFGTVTHVKVNFNNGGLAQSLQSQAAPTLLNNTLATSAAGLRSSPPPGLGTKASTGSVPLSQFRFNINDANSPLLSNLGDWSSGNNSTNANGNSSNGGSRGLWN.

2 stretches are compositionally biased toward polar residues: residues 1–10 (MSDTTDSTSR) and 21–31 (YDNQSQPTTSE). Disordered stretches follow at residues 1 to 70 (MSDT…TSRV), 149 to 175 (KANN…AANA), 246 to 283 (QQRM…VNSR), 513 to 608 (TARE…EEEK), 661 to 816 (KKLK…ESQN), 924 to 945 (PNGL…RLNS), and 1214 to 1234 (GNNS…GLWN). A compositionally biased stretch (basic residues) spans 39–51 (NKKKKKKANKKHK). A compositionally biased stretch (low complexity) spans 161–175 (NGTSSASGANSAANA). Composition is skewed to basic and acidic residues over residues 263 to 273 (ENPEVHGEHPH) and 513 to 527 (TARE…KKDA). Acidic residues-rich tracts occupy residues 555 to 587 (EYYE…DDLV) and 596 to 605 (ASDTESEISE). Positions 633 to 826 (KEKLSEDRTQ…QLELESAQLP (194 aa)) form a coiled coil. Basic and acidic residues-rich tracts occupy residues 661–670 (KKLKQKEKAK) and 679–806 (AKEE…KEQQ). Composition is skewed to low complexity over residues 929-941 (SSTS…SSKS) and 1214-1227 (GNNS…SSNG).

It belongs to the NST1 family.

It is found in the cytoplasm. Its function is as follows. May act as a negative regulator of salt tolerance. This chain is Stress response protein NST1 (NST1), found in Scheffersomyces stipitis (strain ATCC 58785 / CBS 6054 / NBRC 10063 / NRRL Y-11545) (Yeast).